The sequence spans 43 residues: Potassium channel toxin gamma-KTx 4.3 (43 aa).

Cystine bridges form between Cys5-Cys23, Cys11-Cys34, Cys20-Cys39, and Cys24-Cys41.

The protein belongs to the ergtoxin family. Gamma-KTx 4 subfamily. As to expression, expressed by the venom gland.

The protein localises to the secreted. Reversibly blocks Kv11/ERG potassium channels. The protein is Potassium channel toxin gamma-KTx 4.3 of Centruroides exilicauda (Bark scorpion).